The chain runs to 752 residues: Double zinc ribbon and ankyrin repeat-containing protein 1 (752 aa).

Residues serine 160 and serine 182 each carry the phosphoserine modification. Residues 164–187 form a disordered region; that stretch reads IPAYGGGSGSRPPTRQSQSPGFAH. Residues 174-183 are compositionally biased toward polar residues; sequence RPPTRQSQSP. 2 DZANK-type zinc fingers span residues 211-270 and 339-387; these read CAHC…CVVC and CYRC…GSCG. ANK repeat units follow at residues 605 to 636 and 640 to 669; these read ENRL…DPNC and DNRP…DIDQ.

In terms of assembly, interacts with NINL isoform 2. Associates with DYNC1H1 and multiple dynein intermediate and light chains as well as actin-binding proteins.

The protein localises to the cytoplasm. It is found in the cytoskeleton. The protein resides in the microtubule organizing center. Its subcellular location is the centrosome. It localises to the cilium basal body. Its function is as follows. Involved in vesicle transport in photoreceptor cells. In Homo sapiens (Human), this protein is Double zinc ribbon and ankyrin repeat-containing protein 1.